Consider the following 893-residue polypeptide: TBC domain-containing protein kinase-like protein (893 aa).

Residues 1 to 273 (MFPLKDAEMG…PDQLMKDKVF (273 aa)) form the Protein kinase domain. The region spanning 466–651 (DIPPLMRGLT…HLWDTLLLGN (186 aa)) is the Rab-GAP TBC domain. A disordered region spans residues 710-749 (YRQHAQPPKPSSDSSGGRSSAPYFSAECPDPPKTDLSRES). Residues 720-729 (SSDSSGGRSS) show a composition bias toward low complexity. Residues 790–889 (SKPKLLVVDI…IKPTGLLTIP (100 aa)) enclose the Rhodanese domain.

Belongs to the protein kinase superfamily. As to quaternary structure, component of the FERRY complex composed of five subunits, TBCK, PPP1R21, FERRY3, CRYZL1 and GATD1 with a ratio of 1:2:1:2:4, respectively.

The protein resides in the cytoplasm. The protein localises to the cytoskeleton. It is found in the spindle. It localises to the midbody. Its subcellular location is the early endosome. Its function is as follows. Component of the FERRY complex (Five-subunit Endosomal Rab5 and RNA/ribosome intermediary). The FERRY complex directly interacts with mRNAs and RAB5A, and functions as a RAB5A effector involved in the localization and the distribution of specific mRNAs most likely by mediating their endosomal transport. The complex recruits mRNAs and ribosomes to early endosomes through direct mRNA-interaction. Also involved in the modulation of mTOR signaling and expression of mTOR complex components. Involved in the control of actin-cytoskeleton organization. In Homo sapiens (Human), this protein is TBC domain-containing protein kinase-like protein.